The sequence spans 127 residues: MLLLFLNSVGFIVPVLLAVALLTLIERKMLGYMHVRKGPNNVGPYGLLQPIADGFKLLIKETLKPSNASPYLFYSSPALFLFLAILLWSIIPVGESTLNFNLSLVLILGLSSLSVYSLLGSGWSSNS.

Transmembrane regions (helical) follow at residues 2-22, 71-91, and 100-120; these read LLLF…VALL, YLFY…WSII, and FNLS…SLLG.

This sequence belongs to the complex I subunit 1 family.

It is found in the mitochondrion inner membrane. It carries out the reaction a ubiquinone + NADH + 5 H(+)(in) = a ubiquinol + NAD(+) + 4 H(+)(out). Its function is as follows. Core subunit of the mitochondrial membrane respiratory chain NADH dehydrogenase (Complex I) that is believed to belong to the minimal assembly required for catalysis. Complex I functions in the transfer of electrons from NADH to the respiratory chain. The immediate electron acceptor for the enzyme is believed to be ubiquinone. This Asterias forbesi (Forbes' starfish) protein is NADH-ubiquinone oxidoreductase chain 1 (ND1).